The following is a 118-amino-acid chain: Large ribosomal subunit protein uL18 (118 aa).

Belongs to the universal ribosomal protein uL18 family. As to quaternary structure, part of the 50S ribosomal subunit; part of the 5S rRNA/L5/L18/L25 subcomplex. Contacts the 5S and 23S rRNAs.

In terms of biological role, this is one of the proteins that bind and probably mediate the attachment of the 5S RNA into the large ribosomal subunit, where it forms part of the central protuberance. The chain is Large ribosomal subunit protein uL18 from Myxococcus xanthus (strain DK1622).